Consider the following 610-residue polypeptide: MNSQDLKKRQEKIRNFSIIAHIDHGKSTLADRILEKTETVSSREMQAQLLDSMDLERERGITIKLNAIELNYTAKDGETYIFHLIDTPGHVDFTYEVSRSLAACEGAILVVDAAQGIEAQTLANVYLALDNDLEILPVINKIDLPAADPERVRHEVEDVIGLDASEAVLASAKAGIGIEEILEQIVEKVPAPTGDVDAPFQALIFDSVYDAYRGVILQVRIVNGIVKPGDKIQMMSNGKTFDVTEVGIFTPKAVGRDFLATGDVGYVAASIKTVADTRVGDTVTLANNPAKEALHGYKQMNPMVFAGIYPIESNKYNDLREALEKLQLNDASLQFEPETSQALGFGFRCGFLGLLHMDVIQERLEREFNIDLIMTAPSVVYHVHTTDEDMIEVSNPSEFPDPTRVAFIEEPYVKAQIMVPQEFVGAVMELSQRRRGDFVTMDYIDDNRVNVIYQIPLAEIVFDFFDKLKSSTRGYASFDYDMSEYRRSQLVKMDILLNGDKVDALSFIVHKEFAYERGKIIVEKLKKIIPRQQFEVPIQAAIGQKIVARSDIKALRKNVLAKCYGGDVSRKRKLLEKQKAGKKRMKAIGSVEVPQEAFLSVLSMDDDTKK.

Positions 11–193 (EKIRNFSIIA…QIVEKVPAPT (183 aa)) constitute a tr-type G domain. Residues 23–28 (DHGKST) and 140–143 (NKID) contribute to the GTP site.

This sequence belongs to the TRAFAC class translation factor GTPase superfamily. Classic translation factor GTPase family. LepA subfamily.

It is found in the cell membrane. It carries out the reaction GTP + H2O = GDP + phosphate + H(+). Functionally, required for accurate and efficient protein synthesis under certain stress conditions. May act as a fidelity factor of the translation reaction, by catalyzing a one-codon backward translocation of tRNAs on improperly translocated ribosomes. Back-translocation proceeds from a post-translocation (POST) complex to a pre-translocation (PRE) complex, thus giving elongation factor G a second chance to translocate the tRNAs correctly. Binds to ribosomes in a GTP-dependent manner. This is Elongation factor 4 from Streptococcus pyogenes serotype M49 (strain NZ131).